Here is a 456-residue protein sequence, read N- to C-terminus: ATP synthase subunit beta 1 (456 aa).

Residue glycine 152 to serine 159 participates in ATP binding.

It belongs to the ATPase alpha/beta chains family. In terms of assembly, F-type ATPases have 2 components, CF(1) - the catalytic core - and CF(0) - the membrane proton channel. CF(1) has five subunits: alpha(3), beta(3), gamma(1), delta(1), epsilon(1). CF(0) has three main subunits: a(1), b(2) and c(9-12). The alpha and beta chains form an alternating ring which encloses part of the gamma chain. CF(1) is attached to CF(0) by a central stalk formed by the gamma and epsilon chains, while a peripheral stalk is formed by the delta and b chains.

It is found in the cell membrane. The catalysed reaction is ATP + H2O + 4 H(+)(in) = ADP + phosphate + 5 H(+)(out). Its function is as follows. Produces ATP from ADP in the presence of a proton gradient across the membrane. The catalytic sites are hosted primarily by the beta subunits. This chain is ATP synthase subunit beta 1, found in Listeria monocytogenes serotype 4b (strain F2365).